The chain runs to 287 residues: uncharacterized protein (287 aa).

The signal sequence occupies residues 1–20 (MKVICGSVFLFSLFFQVVLG). The Extracellular portion of the chain corresponds to 22–201 (YFSSSSGNPN…AFYGPRRNIK (180 aa)). 3 N-linked (GlcNAc...) asparagine glycosylation sites follow: Asn-120, Asn-154, and Asn-166. Residues 202 to 222 (AAIAVPSVILGLILVALVYYA) traverse the membrane as a helical segment. Over 223–287 (YRKDTWKIYM…YYQSQVKKFH (65 aa)) the chain is Cytoplasmic.

Its subcellular location is the membrane. This is an uncharacterized protein from Schizosaccharomyces pombe (strain 972 / ATCC 24843) (Fission yeast).